Reading from the N-terminus, the 1024-residue chain is Beta-galactosidase (1024 aa).

Substrate contacts are provided by N103 and D202. D202 provides a ligand contact to Na(+). Mg(2+)-binding residues include E417, H419, and E462. Substrate-binding positions include E462 and 538–541; that span reads EYAH. E462 functions as the Proton donor in the catalytic mechanism. The active-site Nucleophile is the E538. Mg(2+) is bound at residue N598. F602 and N605 together coordinate Na(+). Residues N605 and W1000 each coordinate substrate.

Belongs to the glycosyl hydrolase 2 family. As to quaternary structure, homotetramer. The cofactor is Mg(2+). It depends on Na(+) as a cofactor.

It carries out the reaction Hydrolysis of terminal non-reducing beta-D-galactose residues in beta-D-galactosides.. This chain is Beta-galactosidase, found in Escherichia coli O127:H6 (strain E2348/69 / EPEC).